The chain runs to 125 residues: Ribosome-binding factor A (125 aa).

Belongs to the RbfA family. As to quaternary structure, monomer. Binds 30S ribosomal subunits, but not 50S ribosomal subunits or 70S ribosomes.

It is found in the cytoplasm. One of several proteins that assist in the late maturation steps of the functional core of the 30S ribosomal subunit. Associates with free 30S ribosomal subunits (but not with 30S subunits that are part of 70S ribosomes or polysomes). Required for efficient processing of 16S rRNA. May interact with the 5'-terminal helix region of 16S rRNA. The chain is Ribosome-binding factor A from Wigglesworthia glossinidia brevipalpis.